The following is a 368-amino-acid chain: uncharacterized protein (368 aa).

A compositionally biased stretch (low complexity) spans 156 to 182; sequence SNVNAHNNNNNSNNNNNNNNNSNNNNN. 3 disordered regions span residues 156–213, 228–259, and 291–319; these read SNVN…SSPY, ASTN…INDL, and STTS…FSTA. The span at 183-194 shows a compositional bias: polar residues; it reads LYNQTQFSTRYF. Low complexity-rich tracts occupy residues 195 to 213 and 228 to 240; these read NSNS…SSPY and ASTN…SNNS. Composition is skewed to polar residues over residues 241-254 and 297-311; these read MHTN…TSAD and IGTN…PSPS.

This is an uncharacterized protein from Saccharomyces cerevisiae (strain ATCC 204508 / S288c) (Baker's yeast).